An 84-amino-acid chain; its full sequence is Cell division topological specificity factor (84 aa).

Belongs to the MinE family.

Its function is as follows. Prevents the cell division inhibition by proteins MinC and MinD at internal division sites while permitting inhibition at polar sites. This ensures cell division at the proper site by restricting the formation of a division septum at the midpoint of the long axis of the cell. The chain is Cell division topological specificity factor from Chromohalobacter salexigens (strain ATCC BAA-138 / DSM 3043 / CIP 106854 / NCIMB 13768 / 1H11).